Consider the following 360-residue polypeptide: MTTIQQQRSSLLKGWPQFCEWVTSTNNRIYVGWFGVLMIPCLLTAAACFIVAFIAAPPVDIDGIREPVAGSFLYGNNIISGAVVPSSNAIGLHFYPIWEAATVDEWLYNGGPYQLVIFHFLIGISAYMGRQWELSYRLGMRPWICVAYSAPVSAAFAVFLVYPFGQGSFSDGMPLGISGTFNFMFVFQAEHNILMHPFHMAGVAGMFGGSLFSAMHGSLVTSSLIRETTETESQNYGYKFGQEEETYNIVAAHGYFGRLIFQYASFNNSRSLHFFLAVFPVVCVWLTSMGICTMAFNLNGFNFNQSVVDANGKIVPTWGDVLNRANLGMEVMHERNAHNFPLDLAAAESTTVALSAPAIG.

The next 3 membrane-spanning stretches (helical) occupy residues 30–47, 119–134, and 143–157; these read YVGWFGVLMIPCLLTAAA, HFLIGISAYMGRQWEL, and WICVAYSAPVSAAFA. Residue His119 coordinates chlorophyll a. Tyr127 provides a ligand contact to pheophytin a. 2 residues coordinate [CaMn4O5] cluster: Asp171 and Glu190. Residues 198–219 traverse the membrane as a helical segment; that stretch reads FHMAGVAGMFGGSLFSAMHGSL. His199 contacts chlorophyll a. A quinone is bound by residues His216 and 265–266; that span reads SF. Fe cation is bound at residue His216. His273 is a binding site for Fe cation. A helical transmembrane segment spans residues 275-289; sequence FLAVFPVVCVWLTSM. Residues His333, Glu334, Asp343, and Ala345 each coordinate [CaMn4O5] cluster. Residues 346–360 constitute a propeptide that is removed on maturation; sequence AAESTTVALSAPAIG.

The protein belongs to the reaction center PufL/M/PsbA/D family. As to quaternary structure, PSII is composed of 1 copy each of membrane proteins PsbA, PsbB, PsbC, PsbD, PsbE, PsbF, PsbH, PsbI, PsbJ, PsbK, PsbL, PsbM, PsbT, PsbX, PsbY, Psb30/Ycf12, peripheral proteins PsbO, CyanoQ (PsbQ), PsbU, PsbV and a large number of cofactors. It forms dimeric complexes. Requires The D1/D2 heterodimer binds P680, chlorophylls that are the primary electron donor of PSII, and subsequent electron acceptors. It shares a non-heme iron and each subunit binds pheophytin, quinone, additional chlorophylls, carotenoids and lipids. D1 provides most of the ligands for the Mn4-Ca-O5 cluster of the oxygen-evolving complex (OEC). There is also a Cl(-1) ion associated with D1 and D2, which is required for oxygen evolution. The PSII complex binds additional chlorophylls, carotenoids and specific lipids. as cofactor. Tyr-162 forms a radical intermediate that is referred to as redox-active TyrZ, YZ or Y-Z. Post-translationally, C-terminally processed by CtpA; processing is essential to allow assembly of the oxygen-evolving complex and thus photosynthetic growth.

It localises to the cellular thylakoid membrane. It catalyses the reaction 2 a plastoquinone + 4 hnu + 2 H2O = 2 a plastoquinol + O2. Photosystem II (PSII) is a light-driven water:plastoquinone oxidoreductase that uses light energy to abstract electrons from H(2)O, generating O(2) and a proton gradient subsequently used for ATP formation. It consists of a core antenna complex that captures photons, and an electron transfer chain that converts photonic excitation into a charge separation. The D1/D2 (PsbA/PsbD) reaction center heterodimer binds P680, the primary electron donor of PSII as well as several subsequent electron acceptors. The polypeptide is Photosystem II protein D1 (Prochlorococcus marinus (strain MIT 9301)).